The sequence spans 274 residues: Acetyl-coenzyme A carboxylase carboxyl transferase subunit beta (274 aa).

Residues 18 to 274 (IWTKCKKCDY…FYNRQCFLKF (257 aa)) enclose the CoA carboxyltransferase N-terminal domain. Zn(2+) is bound by residues Cys-22, Cys-25, Cys-41, and Cys-44. The segment at 22-44 (CKKCDYILLQKDFEENLMVCPKC) adopts a C4-type zinc-finger fold.

Belongs to the AccD/PCCB family. As to quaternary structure, acetyl-CoA carboxylase is a heterohexamer composed of biotin carboxyl carrier protein (AccB), biotin carboxylase (AccC) and two subunits each of ACCase subunit alpha (AccA) and ACCase subunit beta (AccD). Requires Zn(2+) as cofactor.

The protein localises to the cytoplasm. It carries out the reaction N(6)-carboxybiotinyl-L-lysyl-[protein] + acetyl-CoA = N(6)-biotinyl-L-lysyl-[protein] + malonyl-CoA. The protein operates within lipid metabolism; malonyl-CoA biosynthesis; malonyl-CoA from acetyl-CoA: step 1/1. In terms of biological role, component of the acetyl coenzyme A carboxylase (ACC) complex. Biotin carboxylase (BC) catalyzes the carboxylation of biotin on its carrier protein (BCCP) and then the CO(2) group is transferred by the transcarboxylase to acetyl-CoA to form malonyl-CoA. The chain is Acetyl-coenzyme A carboxylase carboxyl transferase subunit beta from Endomicrobium trichonymphae.